A 149-amino-acid chain; its full sequence is MNQVVIYTDGACKGNPGPGGWGVVLRSGALEKELFGGELGTTNNRMELLAVIEALGALKRPCAVTLYLDSQYVRKGITEWIQGWKKKGWRTASGQPVKNVELWKRLDDLVAGGGHVIDWRWVKGHAGDPGNERADALANKGVDKALGRA.

Positions 1 to 143 (MNQVVIYTDG…ADALANKGVD (143 aa)) constitute an RNase H type-1 domain. Residues D9, E47, D69, and D135 each contribute to the Mg(2+) site.

This sequence belongs to the RNase H family. Monomer. Mg(2+) is required as a cofactor.

The protein localises to the cytoplasm. The enzyme catalyses Endonucleolytic cleavage to 5'-phosphomonoester.. Its function is as follows. Endonuclease that specifically degrades the RNA of RNA-DNA hybrids. This chain is Ribonuclease H, found in Paracidovorax citrulli (strain AAC00-1) (Acidovorax citrulli).